A 188-amino-acid polypeptide reads, in one-letter code: Elongation factor P (188 aa).

Belongs to the elongation factor P family.

Its subcellular location is the cytoplasm. The protein operates within protein biosynthesis; polypeptide chain elongation. Functionally, involved in peptide bond synthesis. Stimulates efficient translation and peptide-bond synthesis on native or reconstituted 70S ribosomes in vitro. Probably functions indirectly by altering the affinity of the ribosome for aminoacyl-tRNA, thus increasing their reactivity as acceptors for peptidyl transferase. This chain is Elongation factor P, found in Ureaplasma urealyticum serovar 10 (strain ATCC 33699 / Western).